A 342-amino-acid polypeptide reads, in one-letter code: N-acetyl-gamma-glutamyl-phosphate reductase (342 aa).

The active site involves Cys-149.

Belongs to the NAGSA dehydrogenase family. Type 1 subfamily.

The protein localises to the cytoplasm. It catalyses the reaction N-acetyl-L-glutamate 5-semialdehyde + phosphate + NADP(+) = N-acetyl-L-glutamyl 5-phosphate + NADPH + H(+). The protein operates within amino-acid biosynthesis; L-arginine biosynthesis; N(2)-acetyl-L-ornithine from L-glutamate: step 3/4. In terms of biological role, catalyzes the NADPH-dependent reduction of N-acetyl-5-glutamyl phosphate to yield N-acetyl-L-glutamate 5-semialdehyde. The sequence is that of N-acetyl-gamma-glutamyl-phosphate reductase from Aromatoleum aromaticum (strain DSM 19018 / LMG 30748 / EbN1) (Azoarcus sp. (strain EbN1)).